Reading from the N-terminus, the 224-residue chain is uncharacterized protein (224 aa).

Transmembrane regions (helical) follow at residues 25–45, 56–76, 107–127, and 149–169; these read ALAW…IYGI, VFLI…VILP, ELFL…YFFV, and IFVK…VVYF.

Its subcellular location is the cell membrane. This is an uncharacterized protein from Mycoplasma pneumoniae (strain ATCC 29342 / M129 / Subtype 1) (Mycoplasmoides pneumoniae).